The following is a 201-amino-acid chain: Small ribosomal subunit protein uS4c (201 aa).

The tract at residues 17 to 44 (ALPGLTNKKPRTGSDLRNQSRSGKKSQY) is disordered. The S4 RNA-binding domain maps to 89 to 149 (MRLDNILFRL…DEQKSRALIQ (61 aa)).

The protein belongs to the universal ribosomal protein uS4 family. In terms of assembly, part of the 30S ribosomal subunit. Contacts protein S5. The interaction surface between S4 and S5 is involved in control of translational fidelity.

The protein localises to the plastid. Its subcellular location is the chloroplast. In terms of biological role, one of the primary rRNA binding proteins, it binds directly to 16S rRNA where it nucleates assembly of the body of the 30S subunit. With S5 and S12 plays an important role in translational accuracy. This chain is Small ribosomal subunit protein uS4c (rps4), found in Atropa belladonna (Belladonna).